The chain runs to 356 residues: Uroporphyrinogen decarboxylase (356 aa).

Residues R27–R31, D77, Y154, T209, and H327 contribute to the substrate site.

Belongs to the uroporphyrinogen decarboxylase family. In terms of assembly, homodimer.

Its subcellular location is the cytoplasm. The catalysed reaction is uroporphyrinogen III + 4 H(+) = coproporphyrinogen III + 4 CO2. Its pathway is porphyrin-containing compound metabolism; protoporphyrin-IX biosynthesis; coproporphyrinogen-III from 5-aminolevulinate: step 4/4. Functionally, catalyzes the decarboxylation of four acetate groups of uroporphyrinogen-III to yield coproporphyrinogen-III. This chain is Uroporphyrinogen decarboxylase, found in Hahella chejuensis (strain KCTC 2396).